A 334-amino-acid polypeptide reads, in one-letter code: MKVNITNLYGMSGQSTALIAQNDVTKLAKQLGFNELSFYFYDIYSDSQSELSRRLDGIMASVGYGDVVIYQSPTWNGREFDQAFISKLKILQAKLITFIHDVPPLMFPSNYYLMPEYIDMYNQSDAVIVPSEQMRDKLLAEGLTVNKILIQRMWDHPYDLPLHQPQFAPKLYFAGSVERFPHLINWSYATPLEIFSPEEESNPEANVSYCGWVSRPELLLELSKGGLGLVWGVEDNPADEPEYYGLNISHKSATYLAAGIPVIVPSYLSNAELIRERGLGFVVDSLEEASRIVENLTVEEYQDMVERVRKFSFLLKEGYFSKKVLIDAVMEVLS.

UDP contacts are provided by residues Thr-16, Arg-179, and 249-254 (SHKSAT).

This sequence belongs to the Gtf3 glucosyltransferase family. Homotetramer; a dimer of dimers.

The protein operates within protein modification; protein glycosylation. Functionally, required for polymorphic O-glycosylation of the serine-rich repeat protein in this bacteria. Catalyzes the second step in glycosylation by transferring glucose from UDP-glucose to the terminal GlcNAc moiety of the 3-O-(N-acetyl-alpha-D-glucosaminyl)-L-seryl-[protein] resulting from the first glycosylation step. Its function is as follows. Part of the accessory SecA2/SecY2 system specifically required to export GspB, a serine-rich repeat cell wall protein encoded upstream in the same operon. The sequence is that of Glucosyltransferase 3 from Streptococcus gordonii.